The primary structure comprises 696 residues: Two-component response regulator ORR22 (696 aa).

The 116-residue stretch at 27–142 folds into the Response regulatory domain; that stretch reads RVLAVDDDPV…ELRNIWQHVV (116 aa). At Asp78 the chain carries 4-aspartylphosphate. The disordered stretch occupies residues 154–214; it reads LDFSKECNKP…DYQENDEPSA (61 aa). The span at 176 to 185 shows a compositional bias: polar residues; sequence TCGSSDQNGR. A compositionally biased stretch (acidic residues) spans 195–211; it reads GEDDDEGDDNDYQENDE. A DNA-binding region (myb-like GARP) is located at residues 214–273; that stretch reads AAKKPRVVWSVELHRKFVAAVNQLGIDKAVPKRILELMNVEKLTRENVASHLQKYRLYLK.

This sequence belongs to the ARR family. Type-B subfamily. Two-component system major event consists of a His-to-Asp phosphorelay between a sensor histidine kinase (HK) and a response regulator (RR). In plants, the His-to-Asp phosphorelay involves an additional intermediate named Histidine-containing phosphotransfer protein (HPt). This multistep phosphorelay consists of a His-Asp-His-Asp sequential transfer of a phosphate group between first a His and an Asp of the HK protein, followed by the transfer to a conserved His of the HPt protein and finally the transfer to an Asp in the receiver domain of the RR protein.

The protein localises to the nucleus. Its function is as follows. Transcriptional activator that binds specific DNA sequence. Functions as a response regulator involved in His-to-Asp phosphorelay signal transduction system. Phosphorylation of the Asp residue in the receiver domain activates the ability of the protein to promote the transcription of target genes. May directly activate some type-A response regulators in response to cytokinins. Functions as a response regulator in response to cytokinins. The protein is Two-component response regulator ORR22 of Oryza sativa subsp. japonica (Rice).